A 245-amino-acid polypeptide reads, in one-letter code: Probable phosphatase PC1_1798 (245 aa).

H7, H9, H15, H40, E73, H101, H131, D192, and H194 together coordinate Zn(2+).

It belongs to the PHP family. As to quaternary structure, homotrimer. Zn(2+) is required as a cofactor.

In Pectobacterium carotovorum subsp. carotovorum (strain PC1), this protein is Probable phosphatase PC1_1798.